The sequence spans 559 residues: Arginine--tRNA ligase (559 aa).

The 'HIGH' region signature appears at 116–126 (ANPNGPLHVGH).

This sequence belongs to the class-I aminoacyl-tRNA synthetase family.

Its subcellular location is the cytoplasm. It carries out the reaction tRNA(Arg) + L-arginine + ATP = L-arginyl-tRNA(Arg) + AMP + diphosphate. This Methanosphaerula palustris (strain ATCC BAA-1556 / DSM 19958 / E1-9c) protein is Arginine--tRNA ligase.